The chain runs to 20 residues: Bulb protein (20 aa).

Residues 1–20 (APDVHTRXTQNGLPPGXLPS) are disordered.

This is Bulb protein from Narcissus pseudonarcissus (Daffodil).